The chain runs to 787 residues: Integrin beta-3 (787 aa).

Residues 1–25 (MRTRRPGQLWATLLALGALAGVVVG) form the signal peptide. Over 27–717 (SNICTTRGVN…EEPECPKGPD (691 aa)) the chain is Extracellular. Residues 29–75 (ICTTRGVNSCQQCLAVSPVCAWCSDESLPQNSPRCNLKKNLLKDKCS) form the PSI domain. Intrachain disulfides connect Cys30-Cys48, Cys38-Cys460, Cys41-Cys63, Cys51-Cys74, Cys202-Cys209, Cys257-Cys298, Cys399-Cys411, Cys431-Cys458, Cys462-Cys482, Cys473-Cys485, Cys487-Cys496, Cys498-Cys528, Cys511-Cys526, Cys520-Cys531, Cys533-Cys546, Cys548-Cys569, Cys553-Cys567, Cys561-Cys572, and Cys574-Cys583. One can recognise a VWFA domain in the interval 134 to 376 (DYPVDIYYLM…QLIVDAYGKI (243 aa)). Ser146 and Ser148 together coordinate Mg(2+). Ser148, Asp151, Asp152, and Asp183 together coordinate Ca(2+). Residues 202–209 (CYTMKSTC) form a CX3CL1-binding region. The involved in CX3CL1-, NRG1-, FGF1- and IGF1-binding stretch occupies residues 202–209 (CYTMKSTC). The Ca(2+) site is built by Asn240, Asp242, Pro244, Glu245, and Asp276. Glu245 lines the Mg(2+) pocket. A CX3CL1-binding region spans residues 292 to 312 (LPNDGRCHIGPDNHYSASTTM). Residues Asn345 and Asn396 are each glycosylated (N-linked (GlcNAc...) asparagine). I-EGF domains follow at residues 462–497 (CQAFAQPLSPRCNNGNGTFECGVCRCDQGWLGSMCE), 498–547 (CSEE…KYCE), 548–584 (CDDFSCVRYKGEMCSGHGQCNCGDCVCDSDWTGYYCN), and 585–624 (CTTRTDTCMSTNGLLCSGRGNCECGSCVCVQPGSYGDTCE). An N-linked (GlcNAc...) asparagine glycan is attached at Asn477. Asn584 is a glycosylation site (N-linked (GlcNAc...) asparagine). 9 cysteine pairs are disulfide-bonded: Cys585/Cys608, Cys592/Cys606, Cys600/Cys611, Cys613/Cys623, Cys626/Cys629, Cys633/Cys680, Cys639/Cys660, Cys642/Cys656, and Cys688/Cys712. The N-linked (GlcNAc...) asparagine glycan is linked to Asn679. Residues 718–738 (ILVVLLSVMGAILLIGLATLL) traverse the membrane as a helical segment. The Cytoplasmic segment spans residues 739–787 (IWKLLITIHDRKEFAKFEEERARAKWDTANNPLYKEATSTFTNITYRGT). Thr766 bears the Phosphothreonine mark. Tyr772 carries the post-translational modification Phosphotyrosine. The LIR signature appears at 776–782 (TSTFTNI). A Phosphothreonine modification is found at Thr778. At Tyr784 the chain carries Phosphotyrosine.

The protein belongs to the integrin beta chain family. Heterodimer of an alpha and a beta subunit. Beta-3 (ITGB3) associates with either alpha-IIB (ITGA2B) or alpha-V (ITGAV). Interacts with FLNB and COMP. Interacts with PDIA6 following platelet stimulation. Interacts with SYK; upon activation by ITGB3 promotes platelet adhesion. Interacts with MYO10. Interacts with DAB2. Interacts with FERMT2. Integrin ITGAV:ITGB3 interacts with FBLN5 (via N-terminus). Interacts with EMP2; regulates the levels of the heterodimer ITGA5:ITGB3 integrin expression on the plasma membrane. ITGAV:ITGB3 interacts with CCN3. ITGAV:ITGB3 and ITGA2B:ITGB3 interact with SELP (via C-type lectin domain); the interaction mediates cell-cell interaction and adhesion. ITGAV:ITGB3 interacts with AGRA2. ITGAV:ITGB3 is found in a ternary complex with CX3CR1 and CX3CL1. ITGAV:ITGB3 is found in a ternary complex with NRG1 and ERBB3. ITGAV:ITGB3 is found in a ternary complex with FGF1 and FGFR1. ITGAV:ITGB3 interacts with FGF2; it is likely that FGF2 can simultaneously bind ITGAV:ITGB3 and FGF receptors. ITGAV:ITGB3 binds to IL1B. ITGAV:ITGB3 is found in a ternary complex with IGF1 and IGF1R. ITGAV:ITGB3 interacts with IGF2. ITGAV:ITGB3 interacts with FBN1. ITGAV:ITGB3 interacts with CD9, CD81 and CD151 (via second extracellular domain). Interacts (via the allosteric site (site 2)) with CXCL12 in a CXCR4-independent manner. Interacts with MXRA8/DICAM; the interaction inhibits ITGAV:ITGB3 heterodimer formation. ITGAV:ITGB3 interacts with PTN. Forms a complex with PTPRZ1 and PTN that stimulates endothelial cell migration through ITGB3 Tyr-772 phosphorylation. ITGAV:ITGB3 interacts with SLC6A4. Interacts with SLC6A4 (via C-terminus); this interaction regulates SLC6A4 trafficking. ITGA2B:ITGB3 interacts with PPIA/CYPA; the interaction is ROS and PPIase activity-dependent and is increased in the presence of thrombin. Interacts with tensin TNS3; TNS3 also interacts with PEAK1, thus acting as an adapter molecule to bridge the association of PEAK1 with ITGB3. Interacts with TM4SF19. Post-translationally, phosphorylated on tyrosine residues in response to thrombin-induced platelet aggregation. Probably involved in outside-in signaling.

It localises to the cell membrane. It is found in the cell projection. The protein localises to the lamellipodium membrane. Its subcellular location is the cell junction. The protein resides in the focal adhesion. It localises to the postsynaptic cell membrane. It is found in the synapse. In terms of biological role, integrin alpha-V/beta-3 (ITGAV:ITGB3) is a receptor for cytotactin, fibronectin, laminin, matrix metalloproteinase-2, osteopontin, osteomodulin, prothrombin, thrombospondin, vitronectin and von Willebrand factor. Integrin alpha-IIB/beta-3 (ITGA2B:ITGB3) is a receptor for fibronectin, fibrinogen, plasminogen, prothrombin, thrombospondin and vitronectin. Integrins alpha-IIB/beta-3 and alpha-V/beta-3 recognize the sequence R-G-D in a wide array of ligands. Integrin alpha-IIB/beta-3 recognizes the sequence H-H-L-G-G-G-A-K-Q-A-G-D-V in fibrinogen gamma chain. Following activation integrin alpha-IIB/beta-3 brings about platelet/platelet interaction through binding of soluble fibrinogen. This step leads to rapid platelet aggregation which physically plugs ruptured endothelial surfaces. Fibrinogen binding enhances SELP expression in activated platelets. ITGAV:ITGB3 binds to fractalkine (CX3CL1) and acts as its coreceptor in CX3CR1-dependent fractalkine signaling. ITGAV:ITGB3 binds to NRG1 (via EGF domain) and this binding is essential for NRG1-ERBB signaling. ITGAV:ITGB3 binds to FGF1 and this binding is essential for FGF1 signaling. ITGAV:ITGB3 binds to FGF2 and this binding is essential for FGF2 signaling. ITGAV:ITGB3 binds to IGF1 and this binding is essential for IGF1 signaling. ITGAV:ITGB3 binds to IGF2 and this binding is essential for IGF2 signaling. ITGAV:ITGB3 binds to IL1B and this binding is essential for IL1B signaling. ITGAV:ITGB3 binds to PLA2G2A via a site (site 2) which is distinct from the classical ligand-binding site (site 1) and this induces integrin conformational changes and enhanced ligand binding to site 1. ITGAV:ITGB3 acts as a receptor for fibrillin-1 (FBN1) and mediates R-G-D-dependent cell adhesion to FBN1. In brain, plays a role in synaptic transmission and plasticity. Involved in the regulation of the serotonin neurotransmission, is required to localize to specific compartments within the synapse the serotonin receptor SLC6A4 and for an appropriate reuptake of serotonin. Controls excitatory synaptic strength by regulating GRIA2-containing AMPAR endocytosis, which affects AMPAR abundance and composition. ITGAV:ITGB3 acts as a receptor for CD40LG. ITGAV:ITGB3 acts as a receptor for IBSP and promotes cell adhesion and migration to IBSP. In Rattus norvegicus (Rat), this protein is Integrin beta-3.